The primary structure comprises 287 residues: POU domain class 2-associating factor 2 (287 aa).

In terms of domain architecture, OCA spans lysine 10–arginine 32. Disordered stretches follow at residues aspartate 24–isoleucine 51, threonine 161–arginine 199, and proline 247–glycine 279. 2 stretches are compositionally biased toward polar residues: residues glutamine 33–proline 49 and leucine 180–arginine 199.

It belongs to the POU2AF family. As to quaternary structure, interacts with POU2F3 (via the POU domain) in a DNA-dependent manner; this interaction recruits POU2AF2 to chromatin and increases POU2F3 transactivation activity. Expressed in tuft cells of the small intestine, trachea, thymus, and colon.

It is found in the cytoplasm. The protein localises to the cytosol. It localises to the nucleus. Functionally, transcriptional coactivator of POU2F3. This complex drives the development of tuft cells, a rare chemosensory cells that coordinate immune and neural functions within mucosal epithelial tissues. This is POU domain class 2-associating factor 2 from Mus musculus (Mouse).